The following is a 372-amino-acid chain: tRNA-specific 2-thiouridylase MnmA (372 aa).

ATP is bound by residues 9–16 (GLSGGVDS) and Met35. The segment at 95–97 (NPD) is interaction with target base in tRNA. The Nucleophile role is filled by Cys100. The cysteines at positions 100 and 198 are disulfide-linked. Position 124 (Gly124) interacts with ATP. The segment at 148 to 150 (KDQ) is interaction with tRNA. Cys198 functions as the Cysteine persulfide intermediate in the catalytic mechanism. An interaction with tRNA region spans residues 317–318 (RY).

The protein belongs to the MnmA/TRMU family.

It localises to the cytoplasm. The enzyme catalyses S-sulfanyl-L-cysteinyl-[protein] + uridine(34) in tRNA + AH2 + ATP = 2-thiouridine(34) in tRNA + L-cysteinyl-[protein] + A + AMP + diphosphate + H(+). Catalyzes the 2-thiolation of uridine at the wobble position (U34) of tRNA, leading to the formation of s(2)U34. This Delftia acidovorans (strain DSM 14801 / SPH-1) protein is tRNA-specific 2-thiouridylase MnmA.